The sequence spans 256 residues: Glutamate racemase (256 aa).

Substrate contacts are provided by residues 5-6 and 37-38; these read DS and YG. C69 functions as the Proton donor/acceptor in the catalytic mechanism. 70-71 contributes to the substrate binding site; it reads NT. The active-site Proton donor/acceptor is the C181. 182–183 lines the substrate pocket; the sequence is TH.

Belongs to the aspartate/glutamate racemases family.

The catalysed reaction is L-glutamate = D-glutamate. It participates in cell wall biogenesis; peptidoglycan biosynthesis. Provides the (R)-glutamate required for cell wall biosynthesis. The sequence is that of Glutamate racemase from Buchnera aphidicola subsp. Schizaphis graminum (strain Sg).